A 443-amino-acid chain; its full sequence is Nuclear distribution protein nudF (443 aa).

The region spanning 9–41 (QAEELHKSIIAYLSSINASRSCEVLREELQVDS) is the LisH domain. The stretch at 60–87 (TGIARLQKKILDLESKLAGLQTELDTIS) forms a coiled coil. 8 WD repeats span residues 111–152 (SHRD…RTLK), 154–194 (HMRP…ANVR), 198–238 (GHDH…CVKV), 241–280 (SQGS…SVAS), 283–343 (GHEN…IKTL), 345–384 (GHDN…RLVK), 388–427 (AHGH…PGFQ), and 429–443 (VIAT…RIFT).

Belongs to the WD repeat LIS1/nudF family. Self-associates. Interacts with nudE and dynein.

The protein resides in the cytoplasm. Its subcellular location is the cytoskeleton. It is found in the spindle pole. In terms of biological role, positively regulates the activity of the minus-end directed microtubule motor protein dynein. May enhance dynein-mediated microtubule sliding by targeting dynein to the microtubule plus end. Required for nuclear migration during vegetative growth as well as development. Required for retrograde early endosome (EE) transport from the hyphal tip. Required for localization of dynein to the mitotic spindle poles. Recruits additional proteins to the dynein complex at SPBs. The sequence is that of Nuclear distribution protein nudF from Aspergillus niger (strain ATCC MYA-4892 / CBS 513.88 / FGSC A1513).